The sequence spans 216 residues: MRGFGAEELLNCYARGVFPMAEGRDDPRIYLLDPDERGIIPLDQFHASRSLRKTVRQDVYQVTINQDFEAVVAGCAQSAPGREETWINESIIRLYSQLHDAGYAHSVECWSGADLVGGLYGVSLGAAFFGESMFSLRRDASKVALVHLIARLRAGGYSLLDTQFTTEHLESFGARTISRSDYRERLAEALIFEADFSALPDEITGAQALQSITQTS.

The protein belongs to the L/F-transferase family.

The protein resides in the cytoplasm. The catalysed reaction is N-terminal L-lysyl-[protein] + L-leucyl-tRNA(Leu) = N-terminal L-leucyl-L-lysyl-[protein] + tRNA(Leu) + H(+). The enzyme catalyses N-terminal L-arginyl-[protein] + L-leucyl-tRNA(Leu) = N-terminal L-leucyl-L-arginyl-[protein] + tRNA(Leu) + H(+). It carries out the reaction L-phenylalanyl-tRNA(Phe) + an N-terminal L-alpha-aminoacyl-[protein] = an N-terminal L-phenylalanyl-L-alpha-aminoacyl-[protein] + tRNA(Phe). Functions in the N-end rule pathway of protein degradation where it conjugates Leu, Phe and, less efficiently, Met from aminoacyl-tRNAs to the N-termini of proteins containing an N-terminal arginine or lysine. This chain is Leucyl/phenylalanyl-tRNA--protein transferase, found in Maricaulis maris (strain MCS10) (Caulobacter maris).